A 325-amino-acid chain; its full sequence is GMP reductase (325 aa).

The active-site Thioimidate intermediate is Cys173. 202-225 (IIADGGIRSHGDIAKSIRFGATMV) provides a ligand contact to NADP(+).

It belongs to the IMPDH/GMPR family. GuaC type 2 subfamily.

The catalysed reaction is IMP + NH4(+) + NADP(+) = GMP + NADPH + 2 H(+). Catalyzes the irreversible NADPH-dependent deamination of GMP to IMP. It functions in the conversion of nucleobase, nucleoside and nucleotide derivatives of G to A nucleotides, and in maintaining the intracellular balance of A and G nucleotides. This is GMP reductase from Paracidovorax citrulli (strain AAC00-1) (Acidovorax citrulli).